The chain runs to 293 residues: Exosome complex component RRP4 (293 aa).

Residues glutamate 79 to arginine 159 form the S1 motif domain. At serine 124 the chain carries Phosphoserine.

Belongs to the RRP4 family. Component of the RNA exosome core complex (Exo-9), composed of EXOSC1, EXOSC2, EXOSC3, EXOSC4, EXOSC5, EXOSC6, EXOSC7, EXOSC8 and EXOSC9; within the complex interacts with EXOSC4 and EXOSC7. The catalytically inactive RNA exosome core complex (Exo-9) associates with the catalytic subunit EXOSC10/RRP6. Exo-9 may associate with DIS3 to form the nucleolar exosome complex, or DIS3L to form the cytoplasmic exosome complex. Exo-9 is formed by a hexameric base ring consisting of the heterodimers EXOSC4-EXOSC9, EXOSC5-EXOSC8 and EXOSC6-EXOSC7, and a cap ring consisting of EXOSC1, EXOSC2 and EXOSC3. The RNA exosome complex associates with cofactors C1D/RRP47, MPHOSPH6/MPP6 and MTREX/MTR4. Interacts with GTPBP1. Interacts with ZFP36L1 (via N-terminus).

The protein localises to the cytoplasm. The protein resides in the nucleus. It localises to the nucleolus. Its function is as follows. Non-catalytic component of the RNA exosome complex which has 3'-&gt;5' exoribonuclease activity and participates in a multitude of cellular RNA processing and degradation events. In the nucleus, the RNA exosome complex is involved in proper maturation of stable RNA species such as rRNA, snRNA and snoRNA, in the elimination of RNA processing by-products and non-coding 'pervasive' transcripts, such as antisense RNA species and promoter-upstream transcripts (PROMPTs), and of mRNAs with processing defects, thereby limiting or excluding their export to the cytoplasm. The RNA exosome may be involved in Ig class switch recombination (CSR) and/or Ig variable region somatic hypermutation (SHM) by targeting AICDA deamination activity to transcribed dsDNA substrates. In the cytoplasm, the RNA exosome complex is involved in general mRNA turnover and specifically degrades inherently unstable mRNAs containing AU-rich elements (AREs) within their 3' untranslated regions, and in RNA surveillance pathways, preventing translation of aberrant mRNAs. It seems to be involved in degradation of histone mRNA. The catalytic inactive RNA exosome core complex of 9 subunits (Exo-9) is proposed to play a pivotal role in the binding and presentation of RNA for ribonucleolysis, and to serve as a scaffold for the association with catalytic subunits and accessory proteins or complexes. EXOSC2 as peripheral part of the Exo-9 complex stabilizes the hexameric ring of RNase PH-domain subunits through contacts with EXOSC4 and EXOSC7. In Bos taurus (Bovine), this protein is Exosome complex component RRP4 (EXOSC2).